The sequence spans 287 residues: Nucleotide-binding protein VP2673 (287 aa).

An ATP-binding site is contributed by 8–15 (GHSGAGKS). Residue 56–59 (DIRN) coordinates GTP.

It belongs to the RapZ-like family.

Displays ATPase and GTPase activities. The protein is Nucleotide-binding protein VP2673 of Vibrio parahaemolyticus serotype O3:K6 (strain RIMD 2210633).